Reading from the N-terminus, the 304-residue chain is Ribosomal RNA small subunit methyltransferase H (304 aa).

S-adenosyl-L-methionine-binding positions include 36–38 (GGH), D53, F79, D98, and Q105.

Belongs to the methyltransferase superfamily. RsmH family.

The protein resides in the cytoplasm. The enzyme catalyses cytidine(1402) in 16S rRNA + S-adenosyl-L-methionine = N(4)-methylcytidine(1402) in 16S rRNA + S-adenosyl-L-homocysteine + H(+). In terms of biological role, specifically methylates the N4 position of cytidine in position 1402 (C1402) of 16S rRNA. This chain is Ribosomal RNA small subunit methyltransferase H, found in Myxococcus xanthus (strain DK1622).